The primary structure comprises 172 residues: Large ribosomal subunit protein uL10 (172 aa).

It belongs to the universal ribosomal protein uL10 family. In terms of assembly, part of the ribosomal stalk of the 50S ribosomal subunit. The N-terminus interacts with L11 and the large rRNA to form the base of the stalk. The C-terminus forms an elongated spine to which L12 dimers bind in a sequential fashion forming a multimeric L10(L12)X complex.

Functionally, forms part of the ribosomal stalk, playing a central role in the interaction of the ribosome with GTP-bound translation factors. The sequence is that of Large ribosomal subunit protein uL10 from Beijerinckia indica subsp. indica (strain ATCC 9039 / DSM 1715 / NCIMB 8712).